The sequence spans 746 residues: MQFSRFIPRSSPGLPPYGAHDPPMMQNPAPTTAPPGAITPYLGFKARLSQIWINKWTILLLLVLARVLIAVTGLNDNMASAKREALSACTSVESMGSAMASMPHYMSKGVNELTASGVERAVNGLMSMLLLTVTGVEEVVVFFVNVLTQTYLCLITLAVSGSLHVALKVVEDAADFLNKTLADVTEGIEKGVDGFEDKINDFLKGINSITSAFGGEKDPPKLDIGGDLDKLKEIRLPSSLDEGLKKINDSIPTFDEVNKFANDAIRYPFKEVKKLINQSLEEYKFDRSVFPVPQKEKLSFCGDNDGINSFFGKIGSIISTAKKIFIAVLIAGAVAACVPMALLEIRRWRHMKERASLVQKNDHDPMDVVYIVSRPYTSTAGLKIASWFKPGRRQVLVRWIVAYATTTPALFLLALGIAGLFSCACQAILLHAVKKEVPGLTNEVSQFADKVVMSLNNASEQWAISTNRVIADTNDDINQKVFGWVNTSTTSINDTLNVFVDKTSDVLNDTFGGTILHGPIKDVLYCLIGLKIQGIQKALTWVYDHAHVDFPNMPNDTFSLGAVESIANDNKSDPESFLASPGDKTADAITHVVVRVTEAIENAIRTEALISTFLIALWFAILLIAVLRALTLAFRRDKPRGEGGIDATYHPPAPRAAHAVGSMEMSDFYNVPLTGVPNANGDGGLAPKYSTTPHVRGGSRGSDTDEEEYQAQKLGYAGQRDYEAALNREMCRESSCGQVMYGSEKR.

The disordered stretch occupies residues 1-32 (MQFSRFIPRSSPGLPPYGAHDPPMMQNPAPTT). The Extracellular segment spans residues 1–50 (MQFSRFIPRSSPGLPPYGAHDPPMMQNPAPTTAPPGAITPYLGFKARLSQ). The helical transmembrane segment at 51–71 (IWINKWTILLLLVLARVLIAV) threads the bilayer. At 72–138 (TGLNDNMASA…LLLTVTGVEE (67 aa)) the chain is on the cytoplasmic side. Residues 139–159 (VVVFFVNVLTQTYLCLITLAV) form a helical membrane-spanning segment. The Extracellular segment spans residues 160-323 (SGSLHVALKV…IGSIISTAKK (164 aa)). 3 N-linked (GlcNAc...) asparagine glycosylation sites follow: N178, N248, and N277. Residues 324–344 (IFIAVLIAGAVAACVPMALLE) traverse the membrane as a helical segment. Residues 345-398 (IRRWRHMKERASLVQKNDHDPMDVVYIVSRPYTSTAGLKIASWFKPGRRQVLVR) lie on the Cytoplasmic side of the membrane. Residues 399–421 (WIVAYATTTPALFLLALGIAGLF) form a helical membrane-spanning segment. Over 422 to 606 (SCACQAILLH…TEAIENAIRT (185 aa)) the chain is Extracellular. N457, N486, N493, N508, N555, and N570 each carry an N-linked (GlcNAc...) asparagine glycan. Residues 607–627 (EALISTFLIALWFAILLIAVL) traverse the membrane as a helical segment. Topologically, residues 628 to 746 (RALTLAFRRD…GQVMYGSEKR (119 aa)) are cytoplasmic. The interval 682–708 (DGGLAPKYSTTPHVRGGSRGSDTDEEE) is disordered.

The protein belongs to the PRM1 family.

It localises to the cell membrane. Involved in cell fusion during mating by stabilizing the plasma membrane fusion event. This chain is Plasma membrane fusion protein PRM1 (PRM1), found in Coccidioides immitis (strain RS) (Valley fever fungus).